The primary structure comprises 35 residues: Photosystem II reaction center protein T (35 aa).

Residues 3–23 (ALVYTFLLVSTLGIIFFAIFF) form a helical membrane-spanning segment.

It belongs to the PsbT family. As to quaternary structure, PSII is composed of 1 copy each of membrane proteins PsbA, PsbB, PsbC, PsbD, PsbE, PsbF, PsbH, PsbI, PsbJ, PsbK, PsbL, PsbM, PsbT, PsbY, PsbZ, Psb30/Ycf12, at least 3 peripheral proteins of the oxygen-evolving complex and a large number of cofactors. It forms dimeric complexes.

The protein localises to the plastid. The protein resides in the chloroplast thylakoid membrane. In terms of biological role, found at the monomer-monomer interface of the photosystem II (PS II) dimer, plays a role in assembly and dimerization of PSII. PSII is a light-driven water plastoquinone oxidoreductase, using light energy to abstract electrons from H(2)O, generating a proton gradient subsequently used for ATP formation. The polypeptide is Photosystem II reaction center protein T (Metasequoia glyptostroboides (Dawn redwood)).